A 704-amino-acid chain; its full sequence is Meprin A subunit beta (704 aa).

Residues 1-20 form the signal peptide; the sequence is MDARHQPWFLVFATFLLVSG. Positions 21 to 64 are excised as a propeptide; it reads LPAPEKFVKDIDGGIDQDIFDINQGLGLDLFEGDIKLEANGKNS. Over 21–654 the chain is Extracellular; sequence LPAPEKFVKD…RCEKRGSTRD (634 aa). A Peptidase M12A domain is found at 63–257; that stretch reads NSIIGDHKRW…LKLNQLYNCT (195 aa). 3 cysteine pairs are disulfide-bonded: Cys104–Cys256, Cys125–Cys145, and Cys266–Cys428. His153 provides a ligand contact to Zn(2+). Glu154 is a catalytic residue. His157 and His163 together coordinate Zn(2+). Asn193, Asn219, Asn255, Asn316, Asn422, Asn437, Asn529, Asn548, and Asn593 each carry an N-linked (GlcNAc...) asparagine glycan. Residues 261-430 enclose the MAM domain; the sequence is SFMDSCDFEL…INLSETRCPH (170 aa). An MATH domain is found at 431 to 586; the sequence is HIWHIQNFTQ…GDDIYILLTV (156 aa). Residues 607-647 enclose the EGF-like domain; that stretch reads VHNACSEVVCQNGGICVVQDGRAECKCPAGEDWWYMGKRCE. Disulfide bonds link Cys611–Cys622, Cys616–Cys631, and Cys633–Cys646. The chain crosses the membrane as a helical span at residues 655-678; it reads TVIIAVSSTVTVFAVMLIITLVSV. The Cytoplasmic portion of the chain corresponds to 679-704; that stretch reads YCTRRKYRKKARANTAAMTLENQHAF. Thr697 is subject to Phosphothreonine.

Homotetramer consisting of disulfide-linked beta subunits, or heterotetramer of two alpha and two beta subunits formed by non-covalent association of two disulfide-linked heterodimers. Interacts with MBL2 through its carbohydrate moiety. This interaction may inhibit its catalytic activity. Interacts with TSPAN8. Zn(2+) is required as a cofactor. In terms of processing, proteolytically activated by trypsin in the intestinal lumen and kallikrein-related peptidases in other tissues. Post-translationally, N-glycosylated; contains high mannose and/or complex biantennary structures. Phosphorylated by PKC at multiple sites of its cytoplasmic part. Phosphorylation dcreases activity at the cell surface, leading to diminished substrate cleavage. As to expression, isoform 1 is expressed in kidney, intestinal brush borders, and salivary ducts. Isoform 2 has been found in carcinoma cells.

Its subcellular location is the cell membrane. It localises to the secreted. The catalysed reaction is Hydrolysis of proteins, including azocasein, and peptides. Hydrolysis of 5-His-|-Leu-6, 6-Leu-|-Cys-7, 14-Ala-|-Leu-15 and 19-Cys-|-Gly-20 bonds in insulin B chain.. Strongly inhibited by fetuin-A/AHSG. Inhibited by cysteine and by the metal ion chelators EDTA and 1,10-phenanthroline. Not inhibited by 3,4-dichloroisocourmarin, soybean trypsin inhibitor, or the cysteine proteinase inhibitors iodoacetic acid and E-64. Functionally, membrane metallopeptidase that sheds many membrane-bound proteins. Exhibits a strong preference for acidic amino acids at the P1' position. Known substrates include: FGF19, VGFA, IL1B, IL18, procollagen I and III, E-cadherin, KLK7, gastrin, ADAM10, tenascin-C. The presence of several pro-inflammatory cytokine among substrates implicate MEP1B in inflammation. It is also involved in tissue remodeling due to its capability to degrade extracellular matrix components. This Mus musculus (Mouse) protein is Meprin A subunit beta (Mep1b).